A 443-amino-acid polypeptide reads, in one-letter code: Probable glycine dehydrogenase (decarboxylating) subunit 1 (443 aa).

This sequence belongs to the GcvP family. N-terminal subunit subfamily. The glycine cleavage system is composed of four proteins: P, T, L and H. In this organism, the P 'protein' is a heterodimer of two subunits.

The catalysed reaction is N(6)-[(R)-lipoyl]-L-lysyl-[glycine-cleavage complex H protein] + glycine + H(+) = N(6)-[(R)-S(8)-aminomethyldihydrolipoyl]-L-lysyl-[glycine-cleavage complex H protein] + CO2. Functionally, the glycine cleavage system catalyzes the degradation of glycine. The P protein binds the alpha-amino group of glycine through its pyridoxal phosphate cofactor; CO(2) is released and the remaining methylamine moiety is then transferred to the lipoamide cofactor of the H protein. In Chlorobium limicola (strain DSM 245 / NBRC 103803 / 6330), this protein is Probable glycine dehydrogenase (decarboxylating) subunit 1.